The following is a 250-amino-acid chain: Deoxynucleoside-5'-monophosphate kinase (250 aa).

Residues Gly-14, Asp-16, and Thr-17 each coordinate ATP. Residues Val-44, Lys-65, Arg-130, Gly-137, Thr-138, Trp-150, Asp-170, Arg-172, Glu-176, and Ser-210 each coordinate dGMP.

The protein belongs to the dNMP kinase family. In terms of assembly, monomer.

The catalysed reaction is a 2'-deoxyribonucleoside 5'-phosphate + ATP = a 2'-deoxyribonucleoside 5'-diphosphate + ADP. Its function is as follows. Allows the synthesis of deoxyribonucleoside triphosphates necessary for the rapid viral DNA replication. Phosphorylates all four dNMPs. The enzyme had the highest activity with dAMP and had about 30% less activity with dTMP and dGMP, respectively. The lowest activity was observed with dCMP as the substrate (about 35% of that with dAMP). In Escherichia coli (Enterobacteria phage T5), this protein is Deoxynucleoside-5'-monophosphate kinase.